Reading from the N-terminus, the 244-residue chain is L-xylulose reductase (244 aa).

Residue Met1 is modified to N-acetylmethionine. 11–39 is an NADP(+) binding site; it reads LVTGAGKGIGRSTVLALKAAGAQVVAVSR. Residue Arg21 is modified to Omega-N-methylarginine. Residue Ser136 participates in substrate binding. Tyr149 serves as the catalytic Proton acceptor. Lys153 is a catalytic residue.

It belongs to the short-chain dehydrogenases/reductases (SDR) family. As to quaternary structure, homotetramer. Highly expressed in kidney and liver. Expressed in epididymis. Expressed at intermediate level in lung. Weakly expressed in brain, heart, spleen and testis.

Its subcellular location is the membrane. The catalysed reaction is xylitol + NADP(+) = L-xylulose + NADPH + H(+). Catalyzes the NADPH-dependent reduction of several pentoses, tetroses, trioses, alpha-dicarbonyl compounds and L-xylulose. Participates in the uronate cycle of glucose metabolism. May play a role in the water absorption and cellular osmoregulation in the proximal renal tubules by producing xylitol, an osmolyte, thereby preventing osmolytic stress from occurring in the renal tubules. This is L-xylulose reductase (DCXR) from Cavia porcellus (Guinea pig).